A 116-amino-acid chain; its full sequence is Glycine-rich protein 3 short isoform (116 aa).

The signal sequence occupies residues 1–24 (MASKTLLLLGLFAFLFIVSEMAAA). The tract at residues 27 to 83 (VKSESEETVKPEQHGGGFGDNGGGRYQGGGGHGGHGGGGYQGGGGRYQGGGGRQGGG) is disordered. A compositionally biased stretch (basic and acidic residues) spans 29–39 (SESEETVKPEQ). Positions 40-83 (HGGGFGDNGGGRYQGGGGHGGHGGGGYQGGGGRYQGGGGRQGGG) are enriched in gly residues. 5 repeat units span residues 54-59 (GGGGHG), 62-67 (GGGGYQ), 68-73 (GGGGRY), 75-80 (GGGGRQ), and 81-86 (GGGGSY). Residues 54–86 (GGGGHGGHGGGGYQGGGGRYQGGGGRQGGGGSY) are 5 X 6 AA tandem repeats of G-G-G-G-[HYRS]-[GYQ].

Belongs to the GRP family. As to quaternary structure, interacts with WAK1 (via the extracellular domain). Component of a 500 kDa complex, composed of GRP3 or GRP3-S, WAK1 and KAPP.

The protein resides in the secreted. It is found in the extracellular space. The protein localises to the extracellular matrix. Functionally, regulates the function of the receptor protein kinase WAK1. The sequence is that of Glycine-rich protein 3 short isoform (GRP3S) from Arabidopsis thaliana (Mouse-ear cress).